Reading from the N-terminus, the 184-residue chain is MGVIQAIDRLMTNPIPDGQVDDILRPQGESPLLQKGYVTTSVDALLNWARTGSMWPMTFGLACCAVEMMHAGAARLDLDRYGIVFRPSPRQSDVMIVAGTLVNKMAPALRKVYDQMPDPKWVISMGSCANGGGYYHYSYSVVRGCDRIVPVDVYVPGCPPTAEALVYGILQLQKKIWRTKTIAG.

Residues Cys63, Cys64, Cys128, and Cys158 each coordinate [4Fe-4S] cluster.

The protein belongs to the complex I 20 kDa subunit family. As to quaternary structure, NDH-1 is composed of 14 different subunits. Subunits NuoB, C, D, E, F, and G constitute the peripheral sector of the complex. [4Fe-4S] cluster is required as a cofactor.

The protein resides in the cell inner membrane. It catalyses the reaction a quinone + NADH + 5 H(+)(in) = a quinol + NAD(+) + 4 H(+)(out). Its function is as follows. NDH-1 shuttles electrons from NADH, via FMN and iron-sulfur (Fe-S) centers, to quinones in the respiratory chain. The immediate electron acceptor for the enzyme in this species is believed to be ubiquinone. Couples the redox reaction to proton translocation (for every two electrons transferred, four hydrogen ions are translocated across the cytoplasmic membrane), and thus conserves the redox energy in a proton gradient. The protein is NADH-quinone oxidoreductase subunit B of Xylella fastidiosa (strain M23).